The following is a 363-amino-acid chain: Fructose-bisphosphate aldolase, muscle type (363 aa).

Substrate-binding residues include R56 and K147. K230 serves as the catalytic Schiff-base intermediate with dihydroxyacetone-P.

It belongs to the class I fructose-bisphosphate aldolase family. Homotetramer. In terms of tissue distribution, expressed mainly in the skeletal muscle, heart muscle, brain, and some other tissues, but probably not in liver.

It carries out the reaction beta-D-fructose 1,6-bisphosphate = D-glyceraldehyde 3-phosphate + dihydroxyacetone phosphate. It functions in the pathway carbohydrate degradation; glycolysis; D-glyceraldehyde 3-phosphate and glycerone phosphate from D-glucose: step 4/4. The protein is Fructose-bisphosphate aldolase, muscle type of Lethenteron camtschaticum (Japanese lamprey).